Consider the following 260-residue polypeptide: tRNA pseudouridine synthase A (260 aa).

Catalysis depends on D52, which acts as the Nucleophile. A substrate-binding site is contributed by Y111.

It belongs to the tRNA pseudouridine synthase TruA family. Homodimer.

The catalysed reaction is uridine(38/39/40) in tRNA = pseudouridine(38/39/40) in tRNA. In terms of biological role, formation of pseudouridine at positions 38, 39 and 40 in the anticodon stem and loop of transfer RNAs. The sequence is that of tRNA pseudouridine synthase A from Beijerinckia indica subsp. indica (strain ATCC 9039 / DSM 1715 / NCIMB 8712).